A 200-amino-acid polypeptide reads, in one-letter code: Alpha-amylase/subtilisin inhibitor (200 aa).

A signal peptide spans 1–22; that stretch reads MVSLRLPLILLSLLAISFSCSA. Cystine bridges form between Cys-63–Cys-112 and Cys-162–Cys-166.

Belongs to the protease inhibitor I3 (leguminous Kunitz-type inhibitor) family.

Its function is as follows. This protein inhibits independently subtilisin and T.castaneum alpha-amylase but not barley alpha-amylase. The chain is Alpha-amylase/subtilisin inhibitor (RASI) from Oryza sativa subsp. japonica (Rice).